The chain runs to 284 residues: tRNA-cytidine(32) 2-sulfurtransferase (284 aa).

A PP-loop motif motif is present at residues 44-49 (SGGKDS). The [4Fe-4S] cluster site is built by cysteine 119, cysteine 122, and cysteine 210.

This sequence belongs to the TtcA family. As to quaternary structure, homodimer. Mg(2+) is required as a cofactor. [4Fe-4S] cluster serves as cofactor.

Its subcellular location is the cytoplasm. It carries out the reaction cytidine(32) in tRNA + S-sulfanyl-L-cysteinyl-[cysteine desulfurase] + AH2 + ATP = 2-thiocytidine(32) in tRNA + L-cysteinyl-[cysteine desulfurase] + A + AMP + diphosphate + H(+). It functions in the pathway tRNA modification. In terms of biological role, catalyzes the ATP-dependent 2-thiolation of cytidine in position 32 of tRNA, to form 2-thiocytidine (s(2)C32). The sulfur atoms are provided by the cysteine/cysteine desulfurase (IscS) system. The polypeptide is tRNA-cytidine(32) 2-sulfurtransferase (Chromohalobacter salexigens (strain ATCC BAA-138 / DSM 3043 / CIP 106854 / NCIMB 13768 / 1H11)).